Here is a 1577-residue protein sequence, read N- to C-terminus: Dynamin-binding protein (1577 aa).

Methionine 1 is modified (N-acetylmethionine). 3 consecutive SH3 domains span residues 2–61 (EPGS…IVTI), 66–126 (EGER…ELCL), and 145–204 (YSMG…LLGP). The interval 209–242 (DESVNAGSGDDSTLNDEVDVSPEEVESEGDEDDQ) is disordered. A compositionally biased stretch (acidic residues) spans 221–242 (TLNDEVDVSPEEVESEGDEDDQ). The SH3 4 domain maps to 243–302 (QAGTYGIALYRFQALESNELDFEVGDKIRILGTLEDGWLEGRLKGKTGIFPHRFVKLCPS). Disordered regions lie at residues 307–361 (ETMA…EEPL) and 375–437 (GQDE…SRQC). Over residues 400–410 (PDLSQEVNGIS) the composition is skewed to polar residues. Serine 494 bears the Phosphoserine mark. 2 disordered regions span residues 519–547 (PERP…DNLD) and 590–681 (RGSS…SEYT). Over residues 617–626 (TPTSTSPHLL) the composition is skewed to low complexity. Residues 632–651 (KPGPPLVVRPSRPAPLPPPT) show a composition bias toward pro residues. The span at 652–662 (QQRLNTASPKP) shows a compositional bias: polar residues. Residues 672–681 (APEKEGSEYT) show a composition bias toward basic and acidic residues. A Phosphoserine modification is found at serine 684. Residues 705 to 755 (LDMHTRAQEELNLLLEEKQDESLRAETLETLKSYESTIQSLNLELQQLREM) are a coiled coil. The DH domain occupies 784-967 (KRAKVVAELL…KEINANINEY (184 aa)). The BAR domain maps to 1008 to 1217 (LKHLTGFAPQ…LKASDREGNL (210 aa)). Residues 1285-1348 (PPEKLFHVQR…YSSFLKPYNP (64 aa)) enclose the SH3 5 domain. Positions 1353 to 1375 (SDSSVVSHSSTESEHSGSSPSFH) are enriched in low complexity. Disordered regions lie at residues 1353–1381 (SDSS…NSSS) and 1415–1510 (ETLG…LGSS). Composition is skewed to polar residues over residues 1418 to 1428 (GVSSNTGNPET) and 1484 to 1497 (DQGS…SRAC). Residues 1513–1576 (EGNQVYFAIY…PSNYIRKTEY (64 aa)) enclose the SH3 6 domain.

In terms of assembly, binds DNM1 via its N-terminal SH3 domains. The C-terminal SH3 domain binds a complex containing actin, tubulin, Hsp70 and actin-regulatory proteins, such as ENAH, EVL, WIRE, CR16, WAVE1 and NAP1L1. Interacts with FASLG. Interacts (via SH3 domain 6) with WASL. Interacts (via SH3 domain 6) interacts with ENAH. Interacts (via C-terminal domain) with TJP1; required for the apical cell-cell junction localization of DNMBP. In terms of tissue distribution, widely expressed.

It localises to the cytoplasm. The protein localises to the golgi apparatus. The protein resides in the golgi stack. Its subcellular location is the cytoskeleton. It is found in the synapse. It localises to the cell junction. Functionally, plays a critical role as a guanine nucleotide exchange factor (GEF) for CDC42 in several intracellular processes associated with the actin and microtubule cytoskeleton. Regulates the structure of apical junctions in epithelial cells. Participates in the normal lumenogenesis of epithelial cell cysts by regulating spindle orientation. Plays a role in ciliogenesis. May play a role in membrane trafficking between the cell surface and the Golgi. In Rattus norvegicus (Rat), this protein is Dynamin-binding protein.